Reading from the N-terminus, the 185-residue chain is Ribosome-recycling factor (185 aa).

The protein belongs to the RRF family.

Its subcellular location is the cytoplasm. Functionally, responsible for the release of ribosomes from messenger RNA at the termination of protein biosynthesis. May increase the efficiency of translation by recycling ribosomes from one round of translation to another. This chain is Ribosome-recycling factor, found in Bacillus cereus (strain G9842).